Here is a 486-residue protein sequence, read N- to C-terminus: Protein ZINC INDUCED FACILITATOR 1 (486 aa).

Helical transmembrane passes span 41–61, 82–102, 109–129, 131–151, 170–190, 212–232, 288–308, 327–347, 362–384, 391–408, 423–443, and 461–481; these read FVWIIVLSTSLPISSLYPFLY, FVGCSFMLGRALTSVFWGIVA, PIILLGTISIAIFNALFGLSS, FWMAIGTRFLLGSFNCLLGTM, AVSTAWGIGLIIGPALGGFLA, ALPCFTISAFALLVTVLCCFI, IIVYCVLCLHDTAYSEIFALW, TVLAISGLGLFSFQVFVYPLA, ALMIPIQMSYPFIAGLSGLSLSL, ILINVLSVSAITGLLILQ, IAMTAMSLFKTVGPAGAGILF, and VFFVLNVIVVVGVALTFKPFL.

Belongs to the major facilitator superfamily. Strongly expressed in developing leaves, differentiating zones of root tips and sepals of developing flowers. Restricted to vascular tissues in older leaves, mature roots, flowers, anthers and filaments. Not expressed in developing anthers.

The protein resides in the vacuole membrane. Major facilitator superfamily (MFS) transporter involved in zinc tolerance by participating in vacuolar sequestration of zinc. This chain is Protein ZINC INDUCED FACILITATOR 1 (ZIF1), found in Arabidopsis thaliana (Mouse-ear cress).